The primary structure comprises 360 residues: Cyclin-dependent kinase 10 (360 aa).

Residues 39–323 form the Protein kinase domain; the sequence is FEKLNRIGEG…AGDCLESSYF (285 aa). ATP-binding positions include 45 to 53 and Lys68; that span reads IGEGTYGIV. The active-site Proton acceptor is Asp163. The residue at position 196 (Thr196) is a Phosphothreonine. Positions 334 to 360 are disordered; the sequence is LMPTFPHHRNKRAAPATSEGQSKRCKP.

It belongs to the protein kinase superfamily. CMGC Ser/Thr protein kinase family. CDC2/CDKX subfamily. In terms of assembly, heterodimer with CCNQ, the interaction is required for kinase activity. Interacts with ETS2. Interacts with PRK2.

It is found in the cytoplasm. The protein localises to the cytoskeleton. It localises to the cilium basal body. It catalyses the reaction L-seryl-[protein] + ATP = O-phospho-L-seryl-[protein] + ADP + H(+). The enzyme catalyses L-threonyl-[protein] + ATP = O-phospho-L-threonyl-[protein] + ADP + H(+). In terms of biological role, cyclin-dependent kinase that phosphorylates the transcription factor ETS2 (in vitro) and positively controls its proteasomal degradation (in cells). Involved in the regulation of actin cytoskeleton organization through the phosphorylation of actin dynamics regulators such as PKN2. Is a negative regulator of ciliogenesis through phosphorylation of PKN2 and promotion of RhoA signaling. In Homo sapiens (Human), this protein is Cyclin-dependent kinase 10 (CDK10).